Here is an 883-residue protein sequence, read N- to C-terminus: Translation initiation factor IF-2 (883 aa).

2 disordered regions span residues 53 to 90 and 171 to 294; these read RSHG…GRSK and EEAA…FERP. The segment covering 81–90 has biased composition (polar residues); sequence EVTVNSGRSK. The span at 172-185 shows a compositional bias: low complexity; sequence EAAAAAKAAEALAA. A compositionally biased stretch (basic and acidic residues) spans 221–238; the sequence is RSDDRNNRSAPRNERGPG. Positions 256-265 are enriched in low complexity; sequence GNSNNSNNRG. The region spanning 382–551 is the tr-type G domain; the sequence is QRPPVVTIMG…SVQAELLELK (170 aa). Positions 391-398 are G1; sequence GHVDHGKT. 391–398 provides a ligand contact to GTP; that stretch reads GHVDHGKT. The G2 stretch occupies residues 416 to 420; that stretch reads GITQH. Residues 437 to 440 are G3; sequence DTPG. GTP-binding positions include 437–441 and 491–494; these read DTPGH and NKID. The interval 491-494 is G4; sequence NKID. The segment at 527–529 is G5; the sequence is SAK.

The protein belongs to the TRAFAC class translation factor GTPase superfamily. Classic translation factor GTPase family. IF-2 subfamily.

It is found in the cytoplasm. One of the essential components for the initiation of protein synthesis. Protects formylmethionyl-tRNA from spontaneous hydrolysis and promotes its binding to the 30S ribosomal subunits. Also involved in the hydrolysis of GTP during the formation of the 70S ribosomal complex. This chain is Translation initiation factor IF-2, found in Stenotrophomonas maltophilia (strain R551-3).